We begin with the raw amino-acid sequence, 285 residues long: Transcription initiation factor IIE subunit beta (285 aa).

Polar residues-rich tracts occupy residues 1–10 (MSSLSDQLSS) and 33–44 (TPTAYLNSNDGH). The tract at residues 1 to 56 (MSSLSDQLSSFKKKVANQPIYAKPQPRQPASPTPTAYLNSNDGHSSAASSPGSYSL) is disordered. The span at 45 to 55 (SSAASSPGSYS) shows a compositional bias: low complexity. Positions 67 to 142 (YSQPADSGVG…FTFKPLHNIR (76 aa)) form a DNA-binding region, TFIIE beta. The disordered stretch occupies residues 240–272 (PTSVDPSTVKRAGHNQTPKQKKPKTRRGKITNT). Over residues 258-268 (KQKKPKTRRGK) the composition is skewed to basic residues.

It belongs to the TFIIE beta subunit family. As to quaternary structure, TFIIE is a tetramer of two alpha (tfa1) and two beta (tfa2) subunits. TFIIE associates with RNA polymerase II via the beta subunit.

The protein localises to the nucleus. In terms of biological role, recruits TFIIH to the initiation complex and stimulates the RNA polymerase II C-terminal domain kinase and DNA-dependent ATPase activities of TFIIH. Both TFIIH and TFIIE are required for promoter clearance by RNA polymerase. The protein is Transcription initiation factor IIE subunit beta (tfa2) of Schizosaccharomyces pombe (strain 972 / ATCC 24843) (Fission yeast).